Consider the following 423-residue polypeptide: Mitogen-activated protein kinase 9 (423 aa).

One can recognise a Protein kinase domain in the interval 26-321 (YQQLKPIGSG…VDEALRHPYI (296 aa)). Residues 32–40 (IGSGAQGIV) and lysine 55 contribute to the ATP site. Aspartate 151 serves as the catalytic Proton acceptor. Threonine 183 bears the Phosphothreonine; by MAP2K7 mark. Positions 183–185 (TPY) match the TXY motif. Tyrosine 185 carries the post-translational modification Phosphotyrosine; by MAP2K4. A compositionally biased stretch (basic and acidic residues) spans 366–375 (RSKNGVKDQP). Residues 366-423 (RSKNGVKDQPSDAAVSSKATPSQSSSINDISSMSTEHTLASDTDSSLDASTGPLEGCR) form a disordered region. Over residues 387 to 416 (SQSSSINDISSMSTEHTLASDTDSSLDAST) the composition is skewed to low complexity.

The protein belongs to the protein kinase superfamily. CMGC Ser/Thr protein kinase family. MAP kinase subfamily. In terms of assembly, interacts with MECOM. Binds to at least four scaffolding proteins, MAPK8IP1/JIP-1, MAPK8IP2/JIP-2, MAPK8IP3/JIP-3/JSAP1 and SPAG9/MAPK8IP4/JIP-4. These proteins also bind other components of the JNK signaling pathway. Interacts with NFATC4. Interacts with ATF7; the interaction does not phosphorylate ATF7 but acts as a docking site for ATF7-associated partners such as JUN. Interacts with BCL10. Interacts with CTNNB1 and GSK3B. Interacts with DCLK2. Interacts with MAPKBP1. Interacts with POU5F1; phosphorylates POU5F1 at 'Ser-347'. Found in a complex with SH3RF1, RAC2, MAP3K7/TAK1, MAP2K7/MKK7, MAPK8IP1/JIP1 and MAPK8/JNK1. Mg(2+) serves as cofactor. In terms of processing, dually phosphorylated on Thr-183 and Tyr-185 by MAP2K7 and MAP2K4, which activates the enzyme. Autophosphorylated in vitro.

It is found in the cytoplasm. The protein localises to the nucleus. It carries out the reaction L-seryl-[protein] + ATP = O-phospho-L-seryl-[protein] + ADP + H(+). The enzyme catalyses L-threonyl-[protein] + ATP = O-phospho-L-threonyl-[protein] + ADP + H(+). Activated by threonine and tyrosine phosphorylation by either of two dual specificity kinases, MAP2K4 and MAP2K7. MAP2K4 shows a strong preference for Tyr-185 while MAP2K7 phosphorylates Tyr-183 preferentially. Inhibited by dual specificity phosphatases, such as DUSP1. Its function is as follows. Serine/threonine-protein kinase involved in various processes such as cell proliferation, differentiation, migration, transformation and programmed cell death. Extracellular stimuli such as pro-inflammatory cytokines or physical stress stimulate the stress-activated protein kinase/c-Jun N-terminal kinase (SAP/JNK) signaling pathway. In this cascade, two dual specificity kinases MAP2K4/MKK4 and MAP2K7/MKK7 phosphorylate and activate MAPK9/JNK2. In turn, MAPK9/JNK2 phosphorylates a number of transcription factors, primarily components of AP-1 such as JUN and ATF2 and thus regulates AP-1 transcriptional activity. In response to oxidative or ribotoxic stresses, inhibits rRNA synthesis by phosphorylating and inactivating the RNA polymerase 1-specific transcription initiation factor RRN3. Promotes stressed cell apoptosis by phosphorylating key regulatory factors including TP53 and YAP1. In T-cells, MAPK8 and MAPK9 are required for polarized differentiation of T-helper cells into Th1 cells. Upon T-cell receptor (TCR) stimulation, is activated by CARMA1, BCL10, MAP2K7 and MAP3K7/TAK1 to regulate JUN protein levels. Plays an important role in the osmotic stress-induced epithelial tight-junctions disruption. When activated, promotes beta-catenin/CTNNB1 degradation and inhibits the canonical Wnt signaling pathway. Also participates in neurite growth in spiral ganglion neurons. Phosphorylates the CLOCK-BMAL1 heterodimer and plays a role in the regulation of the circadian clock. Phosphorylates POU5F1, which results in the inhibition of POU5F1's transcriptional activity and enhances its proteasomal degradation. Phosphorylates ALKBH5 in response to reactive oxygen species (ROS), promoting ALKBH5 sumoylation and inactivation. In Rattus norvegicus (Rat), this protein is Mitogen-activated protein kinase 9 (Mapk9).